We begin with the raw amino-acid sequence, 69 residues long: Beta-defensin 43 (69 aa).

A signal peptide spans 1 to 22 (MRVLFSILGVLTLLSIVPLARS). 2 disulfide bridges follow: Cys-29–Cys-56 and Cys-35–Cys-49.

The protein belongs to the beta-defensin family.

The protein resides in the secreted. Its function is as follows. Has bactericidal activity. This chain is Beta-defensin 43 (Defb43), found in Mus musculus (Mouse).